The chain runs to 241 residues: Isoprenyl transferase (241 aa).

Aspartate 17 is an active-site residue. Aspartate 17 contacts Mg(2+). Substrate is bound by residues 18–21 (GNGR), tryptophan 22, arginine 30, histidine 34, and 62–64 (STE). The Proton acceptor role is filled by asparagine 65. Substrate-binding positions include tryptophan 66, arginine 68, arginine 186, and 192–194 (RLS). Mg(2+) is bound at residue glutamate 205.

This sequence belongs to the UPP synthase family. As to quaternary structure, homodimer. Mg(2+) serves as cofactor.

Its function is as follows. Catalyzes the condensation of isopentenyl diphosphate (IPP) with allylic pyrophosphates generating different type of terpenoids. In Leptospira interrogans serogroup Icterohaemorrhagiae serovar copenhageni (strain Fiocruz L1-130), this protein is Isoprenyl transferase.